A 166-amino-acid polypeptide reads, in one-letter code: Large ribosomal subunit protein uL10 (166 aa).

The protein belongs to the universal ribosomal protein uL10 family. In terms of assembly, part of the ribosomal stalk of the 50S ribosomal subunit. The N-terminus interacts with L11 and the large rRNA to form the base of the stalk. The C-terminus forms an elongated spine to which L12 dimers bind in a sequential fashion forming a multimeric L10(L12)X complex.

Forms part of the ribosomal stalk, playing a central role in the interaction of the ribosome with GTP-bound translation factors. The polypeptide is Large ribosomal subunit protein uL10 (Staphylococcus carnosus (strain TM300)).